Reading from the N-terminus, the 99-residue chain is NADH-quinone oxidoreductase subunit K (99 aa).

Helical transmembrane passes span 3 to 23, 28 to 48, and 59 to 79; these read ILFS…GILI, LIVF…FVAF, and IWVF…LAII.

It belongs to the complex I subunit 4L family. As to quaternary structure, NDH-1 is composed of 14 different subunits. Subunits NuoA, H, J, K, L, M, N constitute the membrane sector of the complex.

Its subcellular location is the cell inner membrane. The catalysed reaction is a quinone + NADH + 5 H(+)(in) = a quinol + NAD(+) + 4 H(+)(out). Functionally, NDH-1 shuttles electrons from NADH, via FMN and iron-sulfur (Fe-S) centers, to quinones in the respiratory chain. The immediate electron acceptor for the enzyme in this species is believed to be ubiquinone. Couples the redox reaction to proton translocation (for every two electrons transferred, four hydrogen ions are translocated across the cytoplasmic membrane), and thus conserves the redox energy in a proton gradient. The sequence is that of NADH-quinone oxidoreductase subunit K from Protochlamydia amoebophila (strain UWE25).